A 415-amino-acid polypeptide reads, in one-letter code: MNNHPATLRNESSFNYWKSRIQNHDKFDEIFELTTDRQRCTPDEVKNNSLWSQYMFCKPFAPTTLKSYKSRFIKLIYCLIDDEYLNNYYDTHTLNKEFNSIVQQQPLIKPEELCRRMLELRSVTKETLQLTINFYTNTMNLPEYKIPKQVMLPRDKEIKNIKNNEKNIVLREIINTILDCIEKKIKHLSSEFVHDRGLIRGAIVFCIMLGTGMRINRSRHLSVDDLNTLIKRGKLRQAIGLKRKKHRTSNSLNSIKQKPLELAREIYIKNPNILNISKNTSTPFKDFKRLLKEANVEMDRPRSNMIRHYLSSNLYNNGMPLQKVARLMNHESSASTRHYLNKYDVGVDESDDNDEDDDDDENDDRIIDENPSGANISNYDINNSSSGNSSSNNTSGNDFNNNISSGDDADLLSFN.

One can recognise a Tyr recombinase domain in the interval 171-357; sequence REIINTILDC…DESDDNDEDD (187 aa). Active-site residues include arginine 214, lysine 242, arginine 307, and histidine 330. The segment at 339-415 is disordered; it reads YLNKYDVGVD…GDDADLLSFN (77 aa). Tyrosine 343 functions as the O-(3'-phospho-DNA)-tyrosine intermediate in the catalytic mechanism. Residues 346 to 363 are compositionally biased toward acidic residues; it reads GVDESDDNDEDDDDDEND. The span at 375 to 404 shows a compositional bias: low complexity; that stretch reads NISNYDINNSSSGNSSSNNTSGNDFNNNIS.

This sequence belongs to the 'phage' integrase family.

In terms of biological role, involved in very late gene activation. This Heliothis zea nuclear polyhedrosis virus (HzSNPV) protein is Very late expression factor 1 (VLF-1).